The chain runs to 461 residues: tRNA modification GTPase MnmE (461 aa).

Residues arginine 22, glutamate 87, and arginine 126 each coordinate (6S)-5-formyl-5,6,7,8-tetrahydrofolate. In terms of domain architecture, TrmE-type G spans 222-382; the sequence is GLKTVIVGKP…LEETIFNMVV (161 aa). K(+) is bound at residue asparagine 232. GTP is bound by residues 232-237, 251-257, and 276-279; these read NVGKSS, TDIPGTT, and DTAG. Serine 236 is a Mg(2+) binding site. 3 residues coordinate K(+): threonine 251, isoleucine 253, and threonine 256. Threonine 257 provides a ligand contact to Mg(2+). Residue lysine 461 coordinates (6S)-5-formyl-5,6,7,8-tetrahydrofolate.

This sequence belongs to the TRAFAC class TrmE-Era-EngA-EngB-Septin-like GTPase superfamily. TrmE GTPase family. As to quaternary structure, homodimer. Heterotetramer of two MnmE and two MnmG subunits. It depends on K(+) as a cofactor.

It is found in the cytoplasm. Its function is as follows. Exhibits a very high intrinsic GTPase hydrolysis rate. Involved in the addition of a carboxymethylaminomethyl (cmnm) group at the wobble position (U34) of certain tRNAs, forming tRNA-cmnm(5)s(2)U34. This is tRNA modification GTPase MnmE from Desulforamulus reducens (strain ATCC BAA-1160 / DSM 100696 / MI-1) (Desulfotomaculum reducens).